Consider the following 138-residue polypeptide: Small ribosomal subunit protein uS11c (138 aa).

Residues 1–22 (MAKSIPKTGSRKNVRIGSRNQT) form a disordered region.

The protein belongs to the universal ribosomal protein uS11 family. As to quaternary structure, part of the 30S ribosomal subunit.

The protein resides in the plastid. The protein localises to the chloroplast. This Phaseolus angularis (Azuki bean) protein is Small ribosomal subunit protein uS11c.